A 487-amino-acid chain; its full sequence is GTPase Der (487 aa).

The segment at M1–R20 is disordered. 2 EngA-type G domains span residues P28–P197 and F225–R401. GTP contacts are provided by residues G34–S41, D83–L87, N149–D152, G231–S238, D278–I282, and N343–D346. Positions R402–R486 constitute a KH-like domain.

This sequence belongs to the TRAFAC class TrmE-Era-EngA-EngB-Septin-like GTPase superfamily. EngA (Der) GTPase family. In terms of assembly, associates with the 50S ribosomal subunit.

In terms of biological role, GTPase that plays an essential role in the late steps of ribosome biogenesis. This is GTPase Der from Leptospira borgpetersenii serovar Hardjo-bovis (strain L550).